A 467-amino-acid chain; its full sequence is Asparagine--tRNA ligase (467 aa).

Belongs to the class-II aminoacyl-tRNA synthetase family. Homodimer.

It localises to the cytoplasm. It carries out the reaction tRNA(Asn) + L-asparagine + ATP = L-asparaginyl-tRNA(Asn) + AMP + diphosphate + H(+). The protein is Asparagine--tRNA ligase of Legionella pneumophila (strain Lens).